A 437-amino-acid chain; its full sequence is tRNA-queuosine alpha-mannosyltransferase (437 aa).

It belongs to the glycosyltransferase group 1 family. Glycosyltransferase 4 subfamily.

The protein localises to the cytoplasm. Its subcellular location is the nucleus. The enzyme catalyses queuosine(34) in tRNA(Asp) + GDP-alpha-D-mannose = O-4''-alpha-D-mannosylqueuosine(34) in tRNA(Asp) + GDP + H(+). Its function is as follows. Glycosyltransferase that specifically catalyzes mannosylation of cytoplasmic tRNA(Asp) modified with queuosine at position 34 (queuosine(34)). Mannosylates the cyclopentene moiety of queuosine(34) in tRNA(Asp) to form mannosyl-queuosine(34). Mannosylation of queuosine(34) in tRNA(Asp) is required to slow-down elongation at cognate codons, GAC and GAU, thereby regulating protein translation. The protein is tRNA-queuosine alpha-mannosyltransferase (gtdc1) of Xenopus tropicalis (Western clawed frog).